The primary structure comprises 343 residues: Dual oxidase maturation factor 1 (343 aa).

The Extracellular portion of the chain corresponds to 1–24 (MATLGHTFPFYAGPKPTFPMDTTL). A helical membrane pass occupies residues 25–45 (ASIIMIFLTALATFIVILPGI). Over 46-51 (RGKTRL) the chain is Cytoplasmic. Residues 52-72 (FWLLRVVTSLFIGAAILAVNF) form a helical membrane-spanning segment. Residues 73-183 (SSEWSVGQVS…RLAGHYTSAM (111 aa)) lie on the Extracellular side of the membrane. Residues Asn-84, Asn-109, and Asn-121 are each glycosylated (N-linked (GlcNAc...) asparagine). The chain crosses the membrane as a helical span at residues 184–204 (LWVAFLCWLLANVMLSMPVLV). Residues 205-206 (YG) lie on the Cytoplasmic side of the membrane. The chain crosses the membrane as a helical span at residues 207–227 (GYMLLATGIFQLLALLFFSMA). The Extracellular portion of the chain corresponds to 228 to 249 (TSLTSPCPLHLGASVLHTHHGP). The chain crosses the membrane as a helical span at residues 250 to 270 (AFWITLTTGLLCVLLGLAMAV). Residues 271–343 (AHRMQPHRLK…AHPKDPDCAL (73 aa)) are Cytoplasmic-facing. The segment at 306 to 343 (RYRSMADSPKSQDIPLSEASSTKAYCKEAHPKDPDCAL) is disordered. The span at 330–343 (YCKEAHPKDPDCAL) shows a compositional bias: basic and acidic residues.

This sequence belongs to the DUOXA family. In terms of assembly, may interact with NUMB. Specifically expressed in thyroid gland. Also detected in esophagus.

Its subcellular location is the membrane. Functionally, may be required for the maturation and the transport from the endoplasmic reticulum to the plasma membrane of functional DUOX1. The sequence is that of Dual oxidase maturation factor 1 (DUOXA1) from Homo sapiens (Human).